The primary structure comprises 223 residues: Putative N-acetylmannosamine-6-phosphate 2-epimerase (223 aa).

Belongs to the NanE family.

It carries out the reaction an N-acyl-D-glucosamine 6-phosphate = an N-acyl-D-mannosamine 6-phosphate. The protein operates within amino-sugar metabolism; N-acetylneuraminate degradation; D-fructose 6-phosphate from N-acetylneuraminate: step 3/5. Its function is as follows. Converts N-acetylmannosamine-6-phosphate (ManNAc-6-P) to N-acetylglucosamine-6-phosphate (GlcNAc-6-P). The chain is Putative N-acetylmannosamine-6-phosphate 2-epimerase from Staphylococcus haemolyticus (strain JCSC1435).